A 149-amino-acid chain; its full sequence is 3-hydroxyacyl-[acyl-carrier-protein] dehydratase FabZ (149 aa).

Residue H49 is part of the active site.

The protein belongs to the thioester dehydratase family. FabZ subfamily.

The protein localises to the cytoplasm. It catalyses the reaction a (3R)-hydroxyacyl-[ACP] = a (2E)-enoyl-[ACP] + H2O. In terms of biological role, involved in unsaturated fatty acids biosynthesis. Catalyzes the dehydration of short chain beta-hydroxyacyl-ACPs and long chain saturated and unsaturated beta-hydroxyacyl-ACPs. In Sulfurimonas denitrificans (strain ATCC 33889 / DSM 1251) (Thiomicrospira denitrificans (strain ATCC 33889 / DSM 1251)), this protein is 3-hydroxyacyl-[acyl-carrier-protein] dehydratase FabZ.